We begin with the raw amino-acid sequence, 136 residues long: Ribosome-binding factor A (136 aa).

It belongs to the RbfA family. Monomer. Binds 30S ribosomal subunits, but not 50S ribosomal subunits or 70S ribosomes.

Its subcellular location is the cytoplasm. In terms of biological role, one of several proteins that assist in the late maturation steps of the functional core of the 30S ribosomal subunit. Associates with free 30S ribosomal subunits (but not with 30S subunits that are part of 70S ribosomes or polysomes). Required for efficient processing of 16S rRNA. May interact with the 5'-terminal helix region of 16S rRNA. The chain is Ribosome-binding factor A from Serratia proteamaculans (strain 568).